A 72-amino-acid polypeptide reads, in one-letter code: Putative membrane protein insertion efficiency factor (72 aa).

The protein belongs to the UPF0161 family.

The protein localises to the cell inner membrane. Functionally, could be involved in insertion of integral membrane proteins into the membrane. The protein is Putative membrane protein insertion efficiency factor of Myxococcus xanthus (strain DK1622).